Here is a 469-residue protein sequence, read N- to C-terminus: Sorting and assembly machinery component 50 homolog (469 aa).

The tract at residues 1 to 20 (MGTVHARSLEPLPSSGPDFG) is disordered. In terms of domain architecture, POTRA spans 45–125 (VVVQHVHFDG…LDVTFEVTEL (81 aa)). K255 bears the N6-methyllysine mark.

The protein belongs to the SAM50/omp85 family. In terms of assembly, associates with the mitochondrial contact site and cristae organizing system (MICOS) complex, composed of at least MICOS10/MIC10, CHCHD3/MIC19, CHCHD6/MIC25, APOOL/MIC27, IMMT/MIC60, APOO/MIC23/MIC26 and QIL1/MIC13. This complex was also known under the names MINOS or MitOS complex. The MICOS complex associates with mitochondrial outer membrane proteins SAMM50, MTX1 and MTX2 (together described as components of the mitochondrial outer membrane sorting assembly machinery (SAM) complex) and DNAJC11, mitochondrial inner membrane protein TMEM11 and with HSPA9. The MICOS and SAM complexes together with DNAJC11 are part of a large protein complex spanning both membranes termed the mitochondrial intermembrane space bridging (MIB) complex. Interacts with CHCHD3/MIC19. Interacts with ARMC1. (Microbial infection) Interacts with parasite T.gondii RH strain MAF1b1; the interaction is probably indirect and results in the disruption of the MIB complex and the formation of SPOTs (structures positive for outer mitochondrial membrane (OMM)), a cellular response to OMM stress, which leads to the constitutive shedding of OMM vesicles.

It is found in the mitochondrion outer membrane. Its subcellular location is the cytoplasm. The protein localises to the mitochondrion. Functionally, plays a crucial role in the maintenance of the structure of mitochondrial cristae and the proper assembly of the mitochondrial respiratory chain complexes. Required for the assembly of TOMM40 into the TOM complex. This Homo sapiens (Human) protein is Sorting and assembly machinery component 50 homolog (SAMM50).